The following is a 230-amino-acid chain: Carbohydrate deacetylase (230 aa).

Residues H59 and H123 each contribute to the Mg(2+) site.

The protein belongs to the YdjC deacetylase family. As to quaternary structure, homodimer. It depends on Mg(2+) as a cofactor.

Functionally, probably catalyzes the deacetylation of acetylated carbohydrates an important step in the degradation of oligosaccharides. This is Carbohydrate deacetylase from Oceanobacillus iheyensis (strain DSM 14371 / CIP 107618 / JCM 11309 / KCTC 3954 / HTE831).